A 275-amino-acid chain; its full sequence is MFEITRPPGVRAHVGVIGGSGLYDPGIVENPVEVKVSTPYGNPSDFIVVGDVAGVKVAFLPRHGRGHRIPPHAINYRANIWALKALGVKWVISVSAVGSLREDYRPGDFVVPDQFIDMTKNRRHYTFYDGPVTVHVSMADPFCEDLRQRLIDSGRRLGYTVHERGTYVCIEGPRFSTRAESRVWKDVFKADIIGMTLVPEINLACEAQLCYATLAMVTDYDVWADRPVTAEEVERVMISNVERARRMLYDVIPKLAGEPELERCSCCRALDTAAI.

Phosphate-binding positions include serine 20, 62-63 (RH), and 95-96 (SA). Cystine bridges form between cysteine 143-cysteine 210, cysteine 205-cysteine 266, and cysteine 264-cysteine 267. Methionine 195 is a binding site for substrate. A phosphate-binding site is contributed by threonine 196. A substrate-binding site is contributed by 219–221 (DYD).

It belongs to the PNP/MTAP phosphorylase family. MTAP subfamily. Homohexamer. Dimer of a homotrimer.

It carries out the reaction S-methyl-5'-thioadenosine + phosphate = 5-(methylsulfanyl)-alpha-D-ribose 1-phosphate + adenine. It functions in the pathway amino-acid biosynthesis; L-methionine biosynthesis via salvage pathway; S-methyl-5-thio-alpha-D-ribose 1-phosphate from S-methyl-5'-thioadenosine (phosphorylase route): step 1/1. In terms of biological role, catalyzes the reversible phosphorylation of S-methyl-5'-thioadenosine (MTA) to adenine and 5-methylthioribose-1-phosphate. Involved in the breakdown of MTA, a major by-product of polyamine biosynthesis. Responsible for the first step in the methionine salvage pathway after MTA has been generated from S-adenosylmethionine. Has broad substrate specificity with 6-aminopurine nucleosides as preferred substrates. The sequence is that of S-methyl-5'-thioadenosine phosphorylase from Aeropyrum pernix (strain ATCC 700893 / DSM 11879 / JCM 9820 / NBRC 100138 / K1).